The primary structure comprises 481 residues: Alpha-L-arabinofuranosidase 43 (481 aa).

A signal peptide spans 1–19 (MRFSVFTAAIAAAFSACCA). 3 N-linked (GlcNAc...) asparagine glycosylation sites follow: asparagine 158, asparagine 176, and asparagine 365.

The protein belongs to the glycosyl hydrolase 43 family.

Its subcellular location is the secreted. It catalyses the reaction Hydrolysis of terminal non-reducing alpha-L-arabinofuranoside residues in alpha-L-arabinosides.. Its activity is regulated as follows. Activity is significantly inhibited by SDS and partially inhibited by Ag(+), Fe(3+) and beta-mercaptoethanol. In terms of biological role, alpha-L-arabinofuranosidase specific for the cleavage of alpha-1,3-linkage. Shows high activity against 4-nitrophenyl alpha-L-arabinofuranoside, debranched arabinan, and sugar beet arabinan. The protein is Alpha-L-arabinofuranosidase 43 of Humicola insolens (Soft-rot fungus).